The following is a 123-amino-acid chain: Large ribosomal subunit protein uL24 (123 aa).

It belongs to the universal ribosomal protein uL24 family. As to quaternary structure, part of the 50S ribosomal subunit.

Functionally, one of two assembly initiator proteins, it binds directly to the 5'-end of the 23S rRNA, where it nucleates assembly of the 50S subunit. One of the proteins that surrounds the polypeptide exit tunnel on the outside of the subunit. The chain is Large ribosomal subunit protein uL24 from Kineococcus radiotolerans (strain ATCC BAA-149 / DSM 14245 / SRS30216).